Consider the following 612-residue polypeptide: Zinc metalloproteinase nas-36 (612 aa).

The first 16 residues, 1-16, serve as a signal peptide directing secretion; the sequence is MLLLVLLFVFISATNA. A glycan (N-linked (GlcNAc...) asparagine) is linked at N15. Positions 17 to 122 are excised as a propeptide; the sequence is SDVGRRELEK…KSKPNVRGRR (106 aa). The Peptidase M12A domain occupies 123–320; that stretch reads SFDASPESKW…IETINKAYCS (198 aa). N163 is a glycosylation site (N-linked (GlcNAc...) asparagine). 8 disulfides stabilise this stretch: C166–C319, C190–C209, C329–C343, C345–C354, C365–C394, C515–C546, C519–C551, and C531–C536. H217 provides a ligand contact to Zn(2+). Residue E218 is part of the active site. Zn(2+)-binding residues include H221 and H227. The 36-residue stretch at 320–355 folds into the EGF-like domain; the sequence is SDRCSGSNDCKNGGYPHPKQCDTCLCPNGLSGPKCE. One can recognise a CUB domain in the interval 365–478; that stretch reads CGGKIVVKEE…VGFKLQARAT (114 aa). Residues 503–552 form the TSP type-1 domain; it reads TDQWAEWGSWSQCSRSCGGCGIMSRVRVCRTKQCKGRRQEFSTCNLKACP.

Zn(2+) is required as a cofactor.

The protein localises to the secreted. Its activity is regulated as follows. Inhibited by 1,10-phenanthroline. In terms of biological role, metalloprotease. Involved in molting, a process during larval stages in which a new cuticle is formed and the old cuticle is shed. The protein is Zinc metalloproteinase nas-36 of Haemonchus contortus (Barber pole worm).